The primary structure comprises 409 residues: uncharacterized protein (409 aa).

An N-terminal signal peptide occupies residues 1 to 39 (MVSDSKLELPLPVNQQKPRRRRILKVHLLIAALILSAVG). 5 residues coordinate Zn(2+): His67, Asp69, Glu181, His250, and His271.

This sequence belongs to the metallo-dependent hydrolases superfamily. Peptidase M19 family. As to quaternary structure, interacts with dil1. Requires Zn(2+) as cofactor.

It carries out the reaction an L-aminoacyl-L-amino acid + H2O = 2 an L-alpha-amino acid. This is an uncharacterized protein from Schizosaccharomyces pombe (strain 972 / ATCC 24843) (Fission yeast).